Reading from the N-terminus, the 362-residue chain is NAD(P)H-quinone oxidoreductase subunit 1, chloroplastic (362 aa).

A run of 8 helical transmembrane segments spans residues 29-49, 103-123, 128-148, 164-184, 202-222, 247-267, 303-323, and 335-355; these read ILPI…IVWL, IAVI…HFVL, IGVF…LMAG, AAQS…ISLL, FFGW…ISSL, YSGI…LVSS, TMGI…SITI, and LLNL…LLTT.

Belongs to the complex I subunit 1 family. As to quaternary structure, NDH is composed of at least 16 different subunits, 5 of which are encoded in the nucleus.

It localises to the plastid. The protein localises to the chloroplast thylakoid membrane. It carries out the reaction a plastoquinone + NADH + (n+1) H(+)(in) = a plastoquinol + NAD(+) + n H(+)(out). It catalyses the reaction a plastoquinone + NADPH + (n+1) H(+)(in) = a plastoquinol + NADP(+) + n H(+)(out). Its function is as follows. NDH shuttles electrons from NAD(P)H:plastoquinone, via FMN and iron-sulfur (Fe-S) centers, to quinones in the photosynthetic chain and possibly in a chloroplast respiratory chain. The immediate electron acceptor for the enzyme in this species is believed to be plastoquinone. Couples the redox reaction to proton translocation, and thus conserves the redox energy in a proton gradient. In Triticum aestivum (Wheat), this protein is NAD(P)H-quinone oxidoreductase subunit 1, chloroplastic.